A 132-amino-acid chain; its full sequence is Intraflagellar transport protein 20 homolog B (132 aa).

A coiled-coil region spans residues 87–112; the sequence is EAQQQQLYALIAEKKMQLERYRIEYD.

Its subcellular location is the golgi apparatus. The protein resides in the cis-Golgi network. The protein localises to the cytoplasm. It is found in the cytoskeleton. It localises to the microtubule organizing center. Its subcellular location is the centrosome. The protein resides in the centriole. The protein localises to the cell projection. It is found in the cilium. Its function is as follows. Involved in ciliary process assembly. May play a role in the trafficking of ciliary membrane proteins from the Golgi complex to the cilium. Regulates the platelet-derived growth factor receptor-alpha (PDGFRA) signaling pathway. Plays an important role in spermatogenesis, particularly spermiogenesis, when germ cells form flagella. This is Intraflagellar transport protein 20 homolog B (ift20-b) from Xenopus laevis (African clawed frog).